Consider the following 726-residue polypeptide: Methyltransferase FGSG_00040 (726 aa).

3 TPR repeats span residues 187–220 (SSDI…GQNV), 224–257 (QLAF…AMPS), and 258–291 (EKSL…YPEN). The SET domain occupies 336 to 531 (APVEIRESPG…AKTEIFFCYR (196 aa)). Position 530 (Tyr530) interacts with S-adenosyl-L-methionine.

This sequence belongs to the class V-like SAM-binding methyltransferase superfamily.

It participates in mycotoxin biosynthesis. Functionally, methyltransferase; part of the gene cluster that mediates the biosynthesis of gramillins A and B, bicyclic lipopeptides that induce cell death in maize leaves but not in wheat leaves. The nonribosomal peptide synthetase GRA1 incorporates respectively a glutamic adic (Glu), a leucine (Leu), a serine (Ser), a hydroxyglutamine (HOGln), a 2-amino decanoic acid, and 2 cysteins (CysB and CysA). The biosynthesis of 2-amino decanoic acid incorporated in gramillins could be initiated by a fatty acid synthase composed of the alpha and beta subunits FGSG_00036 and FGSG_11656. The cytochrome P450 monooxygenase FGSG_15680 could hydroxylate the fatty acid chain. Subsequent oxidation to the ketone by the oxidoreductase FGSG_00048 and transamination by aminotransferase FGSG_00049 could form 2-amino-decanoic acid. On the other hand, FGSG_15680 could also be responsible for the HO-modified glutamine at the gamma-position. Whether hydroxylation occurs on the fully assembled product or on the Gln residue prior to assembly into the gramillins requires further proof. The thioredoxin FGSG_00043 could also be required for the disulfide-bond formation between CysA and CysB. The specific involvement of the remaining proteins from the cluster is more difficult to discern, but could have broader regulatory (FGSG_00040 and FGSG_11657) or enzymatic functions (FGSG_00044 and FGSG_00045). The final C-domain of GRA1 does not possess the expected sequence of a termination CT domain, often implicated in macrocyclization and release of a cyclopeptidein fungal NRPs; and the thioesterase FGSG_00047 may act in concert with the terminal C-domain of GRA1 to catalyze the formation of the macrocyclic anhydride and release of the products. This Gibberella zeae (strain ATCC MYA-4620 / CBS 123657 / FGSC 9075 / NRRL 31084 / PH-1) (Wheat head blight fungus) protein is Methyltransferase FGSG_00040.